We begin with the raw amino-acid sequence, 259 residues long: Triosephosphate isomerase (259 aa).

Substrate is bound at residue N10 to K12. The Electrophile role is filled by H100. E172 acts as the Proton acceptor in catalysis. Residues G178, S218, and G239–G240 each bind substrate.

Belongs to the triosephosphate isomerase family. In terms of assembly, homodimer.

Its subcellular location is the cytoplasm. The catalysed reaction is D-glyceraldehyde 3-phosphate = dihydroxyacetone phosphate. It participates in carbohydrate biosynthesis; gluconeogenesis. It functions in the pathway carbohydrate degradation; glycolysis; D-glyceraldehyde 3-phosphate from glycerone phosphate: step 1/1. Its function is as follows. Involved in the gluconeogenesis. Catalyzes stereospecifically the conversion of dihydroxyacetone phosphate (DHAP) to D-glyceraldehyde-3-phosphate (G3P). The chain is Triosephosphate isomerase from Corynebacterium glutamicum (strain ATCC 13032 / DSM 20300 / JCM 1318 / BCRC 11384 / CCUG 27702 / LMG 3730 / NBRC 12168 / NCIMB 10025 / NRRL B-2784 / 534).